Consider the following 338-residue polypeptide: Ketol-acid reductoisomerase (NADP(+)) (338 aa).

A KARI N-terminal Rossmann domain is found at 1-181; it reads MKVFYDKDCD…GGGRAGIIET (181 aa). Residues 24 to 27, arginine 47, and serine 52 contribute to the NADP(+) site; that span reads YGSQ. Residue histidine 107 is part of the active site. Position 133 (glycine 133) interacts with NADP(+). One can recognise a KARI C-terminal knotted domain in the interval 182-327; it reads DFREETETDL…GKLRAMMPWI (146 aa). Mg(2+) contacts are provided by aspartate 190, glutamate 194, glutamate 226, and glutamate 230. Serine 251 serves as a coordination point for substrate.

The protein belongs to the ketol-acid reductoisomerase family. The cofactor is Mg(2+).

It catalyses the reaction (2R)-2,3-dihydroxy-3-methylbutanoate + NADP(+) = (2S)-2-acetolactate + NADPH + H(+). The catalysed reaction is (2R,3R)-2,3-dihydroxy-3-methylpentanoate + NADP(+) = (S)-2-ethyl-2-hydroxy-3-oxobutanoate + NADPH + H(+). It functions in the pathway amino-acid biosynthesis; L-isoleucine biosynthesis; L-isoleucine from 2-oxobutanoate: step 2/4. Its pathway is amino-acid biosynthesis; L-valine biosynthesis; L-valine from pyruvate: step 2/4. Its function is as follows. Involved in the biosynthesis of branched-chain amino acids (BCAA). Catalyzes an alkyl-migration followed by a ketol-acid reduction of (S)-2-acetolactate (S2AL) to yield (R)-2,3-dihydroxy-isovalerate. In the isomerase reaction, S2AL is rearranged via a Mg-dependent methyl migration to produce 3-hydroxy-3-methyl-2-ketobutyrate (HMKB). In the reductase reaction, this 2-ketoacid undergoes a metal-dependent reduction by NADPH to yield (R)-2,3-dihydroxy-isovalerate. This Bordetella petrii (strain ATCC BAA-461 / DSM 12804 / CCUG 43448) protein is Ketol-acid reductoisomerase (NADP(+)).